The sequence spans 377 residues: Glutamate 5-kinase (377 aa).

Lysine 20 lines the ATP pocket. Substrate-binding residues include serine 60, aspartate 147, and asparagine 159. 179 to 180 (TD) contributes to the ATP binding site. The region spanning 285 to 363 (AGRLVIDDGA…DKVYQVLGEA (79 aa)) is the PUA domain.

This sequence belongs to the glutamate 5-kinase family.

The protein localises to the cytoplasm. It carries out the reaction L-glutamate + ATP = L-glutamyl 5-phosphate + ADP. Its pathway is amino-acid biosynthesis; L-proline biosynthesis; L-glutamate 5-semialdehyde from L-glutamate: step 1/2. Catalyzes the transfer of a phosphate group to glutamate to form L-glutamate 5-phosphate. This chain is Glutamate 5-kinase, found in Acinetobacter baumannii (strain AB307-0294).